Here is a 257-residue protein sequence, read N- to C-terminus: MTQHSRDTPQFYLTAPSPCPYLPGRHERKVFTHLVGNKAGELNDLLTHGGFRRSQSIAYRPACDQCRSCVSVRVVANEFRTSRNQRKILARNADIVGEQRNPVPTSEQYSVFRAYLDQRHRHGGMADMTVLDYAMMVEDSHVETRIIEYRKRTPDTGITGRGGDLIAAALTDVLGDGLSMVYSFYEPGEQNRSLGTFMILDHIARARRLGLPYVYLGYWIEGSKKMDYKGRYLPQQRLASSGWIRIDASGEHPEPQD.

Belongs to the R-transferase family. Bpt subfamily.

It localises to the cytoplasm. The enzyme catalyses N-terminal L-glutamyl-[protein] + L-leucyl-tRNA(Leu) = N-terminal L-leucyl-L-glutamyl-[protein] + tRNA(Leu) + H(+). It catalyses the reaction N-terminal L-aspartyl-[protein] + L-leucyl-tRNA(Leu) = N-terminal L-leucyl-L-aspartyl-[protein] + tRNA(Leu) + H(+). In terms of biological role, functions in the N-end rule pathway of protein degradation where it conjugates Leu from its aminoacyl-tRNA to the N-termini of proteins containing an N-terminal aspartate or glutamate. The sequence is that of Aspartate/glutamate leucyltransferase from Rhodopseudomonas palustris (strain HaA2).